The primary structure comprises 130 residues: Small ribosomal subunit protein uS11 (130 aa).

It belongs to the universal ribosomal protein uS11 family. Part of the 30S ribosomal subunit. Interacts with proteins S7 and S18. Binds to IF-3.

Its function is as follows. Located on the platform of the 30S subunit, it bridges several disparate RNA helices of the 16S rRNA. Forms part of the Shine-Dalgarno cleft in the 70S ribosome. In Acholeplasma laidlawii (strain PG-8A), this protein is Small ribosomal subunit protein uS11.